The primary structure comprises 557 residues: Copine-6 (557 aa).

2 C2 domains span residues 1 to 127 (MSDP…TKPL) and 134 to 263 (NAGK…MQWD). The Ca(2+) site is built by Asp-167, Asp-173, Asp-229, Asp-231, and Asp-237. A linker region region spans residues 244-303 (STFQEMQEGTANPGQEMQWDCINPKYRDKKKHYKSSGTVVLAQCTVEKVHTFLDYIMGGC). A VWFA domain is found at 306 to 526 (SFTVAIDFTA…ALAKCVLAEV (221 aa)).

This sequence belongs to the copine family. As to quaternary structure, interacts (via second C2 domain) with OS9 (via C-terminus); this interaction occurs in a calcium-dependent manner in vitro. May interact with NECAB1. Ca(2+) serves as cofactor.

The protein localises to the cytoplasm. Its subcellular location is the cell membrane. The protein resides in the endosome. It is found in the cytoplasmic vesicle. It localises to the clathrin-coated vesicle. The protein localises to the perikaryon. Its subcellular location is the cell projection. The protein resides in the dendrite. Functionally, calcium-dependent phospholipid-binding protein that plays a role in calcium-mediated intracellular processes. Binds phospholipid membranes in a calcium-dependent manner. Plays a role in dendrite formation by melanocytes. The sequence is that of Copine-6 from Bos taurus (Bovine).